The sequence spans 123 residues: Secreted RxLR effector protein RXLR-C21 (123 aa).

An N-terminal signal peptide occupies residues 1–23; the sequence is MRLHLLVLSVIVVSLLVSDNAHA. A RxLR-dEER motif is present at residues 32 to 65; sequence RALRETPINGLVTNQLAVSRNLTPAKFITNSEER. The helical transmembrane segment at 101-121 threads the bilayer; it reads VTTICSIVLFVMVFGCLYKIF.

It belongs to the RxLR effector family.

Its subcellular location is the secreted. It is found in the host endoplasmic reticulum membrane. Its function is as follows. Secreted effector that does not suppress pattern-triggered immunity (PTI) in plant host. The chain is Secreted RxLR effector protein RXLR-C21 from Plasmopara halstedii (Downy mildew of sunflower).